Reading from the N-terminus, the 1047-residue chain is MPRRDDIHRILVIGSGPVVIGQAAEFDYSGSQACLSLREEGYYVVLLNSNPATIQTDHRIADRVYIEPITVEAVERIIEKEKIDAIEPHMGGQTALNLAVKLKNSGILQRYGIKIIGTPVESIELAEDREKFYEFLKAMGEPQPARYRIRRDHIDEDVASIPDIPVIVRTSFSLGGTGGSIVQNRQDLLAMAENLFRASDIDYLEVNESLEGMKEIEYEVIRDSFGNCITVCNMENLDPMGVHTGESIVVTPSQTLSDIEYQMLRDSAIRIISGLGIEGACNIQFALSEGRYYVIEVNPRTSRSSALASKATGYPIARIAAKIAAGYGLHEIKNPITKSTFAAYEPSLDYVTVKIPRWPFDKFSVDRTIGVQMKSIGEVMGIGRTFEEALMKAIASLDNAFSSNIRLHVPDDELWRLIGKPNDRRIFAIFEGLFRNFDVKRMSRLSGYDEYFIEKMRNIVEALRNMDMGRIPENLLRIKRIGIPDEIISAFCGVPADTITKYRIDRNIMPVYKRIDTCSGEFEVAVPYMYSTYEDEDETPDLSGSIMIIGSGPNRIAQGLEFDYGSVKAILALRDMGYRSIMLNSNPETVSTDFDISDALFFEPVTPEYVVNVIRRSGCAGLIVQFSGQTGQNMARRIEEILGKHIVLGTSTESIDRIEDRTVFSRVIEGLGIKQPPFAIAENENDTVRKAMGLGLPIILRSSHVIGGRSMEIIYDVDYLADRAREIFAISKNVLVSKYLENAVEMDVDFVSDGTSYSICGIIVHIEEAGVHSGDATMVYGPGIVPVDIEKKIEGIVGSMVREFRLIGLSNLQIAVRDGDVYVIELNARSSRSVPFISKATGIDWVRLAVECMIGSRIENKRMEAKSYFLKVSVFPFSKFSDMDVVYGPEMKSTGEAMYPGRTLAEALRKSLQRSISSVLITVRDEDKPRIVDIARILLEKGVKLYATAGTSKFLADHGIPTETLYRVRDRREPRILDMISSGSIDMVINTTEMTAGAVRDGFKIRRICIMRGIPLIMNINLARAYAEALGQVEVDYREIGDYLQVS.

The tract at residues 1–398 is carboxyphosphate synthetic domain; the sequence is MPRRDDIHRI…ALMKAIASLD (398 aa). The ATP site is built by arginine 129, arginine 169, glycine 175, glycine 176, glutamate 208, leucine 210, glutamate 215, glycine 241, valine 242, histidine 243, glutamine 284, and glutamate 296. Residues 133-325 enclose the ATP-grasp 1 domain; it reads YEFLKAMGEP…IARIAAKIAA (193 aa). The Mg(2+) site is built by glutamine 284, glutamate 296, and asparagine 298. Mn(2+) contacts are provided by glutamine 284, glutamate 296, and asparagine 298. Positions 399–539 are oligomerization domain; the sequence is NAFSSNIRLH…YSTYEDEDET (141 aa). The tract at residues 540 to 916 is carbamoyl phosphate synthetic domain; it reads PDLSGSIMII…ALRKSLQRSI (377 aa). The ATP-grasp 2 domain occupies 665–854; sequence SRVIEGLGIK…WVRLAVECMI (190 aa). 10 residues coordinate ATP: arginine 701, lysine 738, leucine 740, glutamate 745, glycine 770, valine 771, histidine 772, serine 773, glutamine 813, and glutamate 825. The Mg(2+) site is built by glutamine 813, glutamate 825, and asparagine 827. Mn(2+) is bound by residues glutamine 813, glutamate 825, and asparagine 827. Positions 910-1047 constitute an MGS-like domain; the sequence is KSLQRSISSV…REIGDYLQVS (138 aa). The allosteric domain stretch occupies residues 916 to 1047; that stretch reads ISSVLITVRD…REIGDYLQVS (132 aa).

The protein belongs to the CarB family. Composed of two chains; the small (or glutamine) chain promotes the hydrolysis of glutamine to ammonia, which is used by the large (or ammonia) chain to synthesize carbamoyl phosphate. Tetramer of heterodimers (alpha,beta)4. Mg(2+) serves as cofactor. Mn(2+) is required as a cofactor.

It carries out the reaction hydrogencarbonate + L-glutamine + 2 ATP + H2O = carbamoyl phosphate + L-glutamate + 2 ADP + phosphate + 2 H(+). The enzyme catalyses hydrogencarbonate + NH4(+) + 2 ATP = carbamoyl phosphate + 2 ADP + phosphate + 2 H(+). Its pathway is amino-acid biosynthesis; L-arginine biosynthesis; carbamoyl phosphate from bicarbonate: step 1/1. The protein operates within pyrimidine metabolism; UMP biosynthesis via de novo pathway; (S)-dihydroorotate from bicarbonate: step 1/3. In terms of biological role, large subunit of the glutamine-dependent carbamoyl phosphate synthetase (CPSase). CPSase catalyzes the formation of carbamoyl phosphate from the ammonia moiety of glutamine, carbonate, and phosphate donated by ATP, constituting the first step of 2 biosynthetic pathways, one leading to arginine and/or urea and the other to pyrimidine nucleotides. The large subunit (synthetase) binds the substrates ammonia (free or transferred from glutamine from the small subunit), hydrogencarbonate and ATP and carries out an ATP-coupled ligase reaction, activating hydrogencarbonate by forming carboxy phosphate which reacts with ammonia to form carbamoyl phosphate. The protein is Carbamoyl phosphate synthase large chain of Thermoplasma acidophilum (strain ATCC 25905 / DSM 1728 / JCM 9062 / NBRC 15155 / AMRC-C165).